A 556-amino-acid chain; its full sequence is Formate--tetrahydrofolate ligase (556 aa).

An ATP-binding site is contributed by threonine 65–serine 72.

This sequence belongs to the formate--tetrahydrofolate ligase family.

The catalysed reaction is (6S)-5,6,7,8-tetrahydrofolate + formate + ATP = (6R)-10-formyltetrahydrofolate + ADP + phosphate. Its pathway is one-carbon metabolism; tetrahydrofolate interconversion. The polypeptide is Formate--tetrahydrofolate ligase (Streptococcus suis (strain 98HAH33)).